Here is a 233-residue protein sequence, read N- to C-terminus: UPF0502 protein YPTS_2082 (233 aa).

This sequence belongs to the UPF0502 family.

This Yersinia pseudotuberculosis serotype IB (strain PB1/+) protein is UPF0502 protein YPTS_2082.